Reading from the N-terminus, the 54-residue chain is U-reduvitoxin-Pr7a (54 aa).

Positions 1-23 (MDFLRILLFVLACIMALFTSAIA) are cleaved as a signal peptide. 3 cysteine pairs are disulfide-bonded: C26–C41, C33–C46, and C40–C53.

The protein belongs to the venom Ptu1-like knottin family. In terms of tissue distribution, expressed by the venom gland.

It is found in the secreted. Functionally, binds reversibly and blocks P/Q-type voltage-gated calcium channels (Cav). This chain is U-reduvitoxin-Pr7a, found in Platymeris rhadamanthus (Red spot assassin bug).